The following is an 81-amino-acid chain: Photosystem I iron-sulfur center (81 aa).

4Fe-4S ferredoxin-type domains follow at residues 2-31 (SHSVKIYDTCIGCTQCVRACPTDVLEMIPW) and 39-68 (IASAPRTEDCVGCKRCESACPTDFLSVRVY). Residues Cys11, Cys14, Cys17, Cys21, Cys48, Cys51, Cys54, and Cys58 each coordinate [4Fe-4S] cluster.

In terms of assembly, the eukaryotic PSI reaction center is composed of at least 11 subunits. [4Fe-4S] cluster is required as a cofactor.

The protein localises to the plastid. It localises to the chloroplast thylakoid membrane. The enzyme catalyses reduced [plastocyanin] + hnu + oxidized [2Fe-2S]-[ferredoxin] = oxidized [plastocyanin] + reduced [2Fe-2S]-[ferredoxin]. Apoprotein for the two 4Fe-4S centers FA and FB of photosystem I (PSI); essential for photochemical activity. FB is the terminal electron acceptor of PSI, donating electrons to ferredoxin. The C-terminus interacts with PsaA/B/D and helps assemble the protein into the PSI complex. Required for binding of PsaD and PsaE to PSI. PSI is a plastocyanin-ferredoxin oxidoreductase, converting photonic excitation into a charge separation, which transfers an electron from the donor P700 chlorophyll pair to the spectroscopically characterized acceptors A0, A1, FX, FA and FB in turn. In Acorus calamus (Sweet flag), this protein is Photosystem I iron-sulfur center.